The following is a 213-amino-acid chain: Adenylate kinase (213 aa).

14–19 provides a ligand contact to ATP; that stretch reads GSGKGT. Residues 34–63 form an NMP region; sequence SSGELFRSAIDSASPLGIKAAEYINQGLLV. Residues Ser-35, Arg-40, 61–63, 89–92, and Gln-96 contribute to the AMP site; these read LLV and GFPR. Positions 129 to 162 are LID; sequence SRFICPSCKHVYNQNQGLSECPTCQMKLVRRSDD. Arg-130 serves as a coordination point for ATP. Zn(2+) is bound by residues Cys-133 and Cys-136. 139-140 provides a ligand contact to ATP; sequence VY. Zn(2+) is bound by residues Cys-149 and Cys-152. Positions 159 and 170 each coordinate AMP. Position 198 (Ala-198) interacts with ATP.

This sequence belongs to the adenylate kinase family. Monomer.

It is found in the cytoplasm. The catalysed reaction is AMP + ATP = 2 ADP. Its pathway is purine metabolism; AMP biosynthesis via salvage pathway; AMP from ADP: step 1/1. In terms of biological role, catalyzes the reversible transfer of the terminal phosphate group between ATP and AMP. Plays an important role in cellular energy homeostasis and in adenine nucleotide metabolism. In Chlamydia abortus (strain DSM 27085 / S26/3) (Chlamydophila abortus), this protein is Adenylate kinase.